Here is a 196-residue protein sequence, read N- to C-terminus: MIKAISTHTKRHIHYLILNNIQDDNELINLLNAVNCKETILVLEDIDCASEAVKSRAKEEETVVEKVTDDKSTLENKILADQLKKVEKVSKLTLSGILNSLDGIFNSEGRIVIMTTNHSEVLDPALIRRGRIDMQIEFSNCDRYQIAKMYENFYGKNADSDILSKIPSDIYSPAHVSGLLLSYRNNPENSLIELTQ.

An ATP-binding site is contributed by 32–39 (NAVNCKET).

The protein belongs to the AAA ATPase family.

This is Putative AAA family ATPase L572 from Acanthamoeba polyphaga mimivirus (APMV).